A 72-amino-acid polypeptide reads, in one-letter code: SRY-related protein ADW5 (72 aa).

Positions 1–69 (VKRPMNAFMV…KHMADYPDYK (69 aa)) form a DNA-binding region, HMG box.

It localises to the nucleus. In Alligator mississippiensis (American alligator), this protein is SRY-related protein ADW5.